The following is a 25-amino-acid chain: Chaperonin GroEL (25 aa).

Belongs to the chaperonin (HSP60) family. Forms a cylinder of 14 subunits composed of two heptameric rings stacked back-to-back. Interacts with the co-chaperonin GroES.

The protein localises to the cytoplasm. The enzyme catalyses ATP + H2O + a folded polypeptide = ADP + phosphate + an unfolded polypeptide.. Its function is as follows. Together with its co-chaperonin GroES, plays an essential role in assisting protein folding. The GroEL-GroES system forms a nano-cage that allows encapsulation of the non-native substrate proteins and provides a physical environment optimized to promote and accelerate protein folding. The polypeptide is Chaperonin GroEL (Delftia acidovorans (Pseudomonas acidovorans)).